The chain runs to 263 residues: tRNA pseudouridine synthase A (263 aa).

Asp-73 acts as the Nucleophile in catalysis. Tyr-131 contacts substrate.

Belongs to the tRNA pseudouridine synthase TruA family. As to quaternary structure, homodimer.

The catalysed reaction is uridine(38/39/40) in tRNA = pseudouridine(38/39/40) in tRNA. In terms of biological role, formation of pseudouridine at positions 38, 39 and 40 in the anticodon stem and loop of transfer RNAs. The chain is tRNA pseudouridine synthase A from Mycoplasmoides gallisepticum (strain R(low / passage 15 / clone 2)) (Mycoplasma gallisepticum).